We begin with the raw amino-acid sequence, 353 residues long: Photosystem II D2 protein (353 aa).

N-acetylthreonine is present on T2. A Phosphothreonine modification is found at T2. The chain crosses the membrane as a helical span at residues 41 to 61 (CAYFALGGWFTGTTFVTSWYT). Residue H118 participates in chlorophyll a binding. Residues 125–141 (GFMLRQFELARSVQLRP) traverse the membrane as a helical segment. Q130 and N143 together coordinate pheophytin a. A helical transmembrane segment spans residues 153-166 (VFVSVFLIYPLGQS). Residue H198 participates in chlorophyll a binding. The chain crosses the membrane as a helical span at residues 208–228 (AALLCAIHGATVENTLFEDGD). Positions 215 and 262 each coordinate a plastoquinone. H215 is a Fe cation binding site. Residue H269 coordinates Fe cation. Residues 279-295 (GLWMSAIGVVGLALNLR) form a helical membrane-spanning segment.

Belongs to the reaction center PufL/M/PsbA/D family. In terms of assembly, PSII is composed of 1 copy each of membrane proteins PsbA, PsbB, PsbC, PsbD, PsbE, PsbF, PsbH, PsbI, PsbJ, PsbK, PsbL, PsbM, PsbT, PsbX, PsbY, PsbZ, Psb30/Ycf12, at least 3 peripheral proteins of the oxygen-evolving complex and a large number of cofactors. It forms dimeric complexes. It depends on The D1/D2 heterodimer binds P680, chlorophylls that are the primary electron donor of PSII, and subsequent electron acceptors. It shares a non-heme iron and each subunit binds pheophytin, quinone, additional chlorophylls, carotenoids and lipids. There is also a Cl(-1) ion associated with D1 and D2, which is required for oxygen evolution. The PSII complex binds additional chlorophylls, carotenoids and specific lipids. as a cofactor.

It localises to the plastid. The protein localises to the chloroplast thylakoid membrane. It carries out the reaction 2 a plastoquinone + 4 hnu + 2 H2O = 2 a plastoquinol + O2. In terms of biological role, photosystem II (PSII) is a light-driven water:plastoquinone oxidoreductase that uses light energy to abstract electrons from H(2)O, generating O(2) and a proton gradient subsequently used for ATP formation. It consists of a core antenna complex that captures photons, and an electron transfer chain that converts photonic excitation into a charge separation. The D1/D2 (PsbA/PsbD) reaction center heterodimer binds P680, the primary electron donor of PSII as well as several subsequent electron acceptors. D2 is needed for assembly of a stable PSII complex. This chain is Photosystem II D2 protein, found in Oryza nivara (Indian wild rice).